Reading from the N-terminus, the 261-residue chain is Putative hydro-lyase SAR11_0660 (261 aa).

This sequence belongs to the D-glutamate cyclase family.

This Pelagibacter ubique (strain HTCC1062) protein is Putative hydro-lyase SAR11_0660.